The primary structure comprises 369 residues: 3-dehydroquinate synthase (369 aa).

Residues aspartate 80–lysine 85, glycine 114–aspartate 118, threonine 138–threonine 139, lysine 151, lysine 160, and threonine 178–threonine 181 each bind NAD(+). Zn(2+)-binding residues include glutamate 193, histidine 256, and histidine 273.

Belongs to the sugar phosphate cyclases superfamily. Dehydroquinate synthase family. The cofactor is Co(2+). Zn(2+) serves as cofactor. NAD(+) is required as a cofactor.

It is found in the cytoplasm. The enzyme catalyses 7-phospho-2-dehydro-3-deoxy-D-arabino-heptonate = 3-dehydroquinate + phosphate. Its pathway is metabolic intermediate biosynthesis; chorismate biosynthesis; chorismate from D-erythrose 4-phosphate and phosphoenolpyruvate: step 2/7. Its function is as follows. Catalyzes the conversion of 3-deoxy-D-arabino-heptulosonate 7-phosphate (DAHP) to dehydroquinate (DHQ). The sequence is that of 3-dehydroquinate synthase from Psychrobacter cryohalolentis (strain ATCC BAA-1226 / DSM 17306 / VKM B-2378 / K5).